The following is a 431-amino-acid chain: Adenylosuccinate synthetase (431 aa).

Residues 13-19 (GDEGKGK) and 41-43 (GHT) each bind GTP. Aspartate 14 functions as the Proton acceptor in the catalytic mechanism. Aspartate 14 and glycine 41 together coordinate Mg(2+). IMP-binding positions include 14–17 (DEGK), 39–42 (NAGH), threonine 130, arginine 144, glutamine 225, threonine 240, and arginine 304. The Proton donor role is filled by histidine 42. 300–306 (ATTGRAR) contributes to the substrate binding site. GTP contacts are provided by residues arginine 306, 332 to 334 (KLD), and 415 to 417 (STG).

Belongs to the adenylosuccinate synthetase family. As to quaternary structure, homodimer. Mg(2+) is required as a cofactor.

Its subcellular location is the cytoplasm. The enzyme catalyses IMP + L-aspartate + GTP = N(6)-(1,2-dicarboxyethyl)-AMP + GDP + phosphate + 2 H(+). It participates in purine metabolism; AMP biosynthesis via de novo pathway; AMP from IMP: step 1/2. Plays an important role in the de novo pathway of purine nucleotide biosynthesis. Catalyzes the first committed step in the biosynthesis of AMP from IMP. This chain is Adenylosuccinate synthetase, found in Ectopseudomonas mendocina (strain ymp) (Pseudomonas mendocina).